Consider the following 507-residue polypeptide: Cyclic GMP-AMP synthase (507 aa).

Residues 1–146 (MEDPRRRTTA…PRAPRGSRKE (146 aa)) are DNA-binding. Residues 1-151 (MEDPRRRTTA…GSRKEPDKLK (151 aa)) form a disordered region. The span at 7–18 (RTTAPRAKKPSA) shows a compositional bias: basic residues. Residues 44–57 (RRAERDGDTTEKPR) are compositionally biased toward basic and acidic residues. Residues 48–59 (RDGDTTEKPRAP) form a required for association with the cell membrane region. Thr-52 is modified (phosphothreonine). The tract at residues 119–132 (RKVVRGPSHRRGAR) is required for activation upon DNA viral infection. Residues 121–131 (VVRGPSHRRGA) show a composition bias toward basic residues. The short motif at 154–159 (LDKLRL) is the Nuclear export signal element. At Lys-156 the chain carries N6-lactoyllysine. Residues 158–201 (RLKRKDISEAAETVNKVVERLLRRMQKRESEFKGVEQLNTGSYY) form a DNA-binding region. Glu-176 carries the post-translational modification PolyADP-ribosyl glutamic acid. Thr-197 contributes to the GTP binding site. Ser-199 serves as a coordination point for ATP. The residue at position 199 (Ser-199) is a Phosphoserine. Residue Tyr-201 is modified to Phosphotyrosine. Residues Glu-211 and Asp-213 each contribute to the Mg(2+) site. Residue Asp-213 coordinates 2',3'-cGAMP. Lys-217 is covalently cross-linked (Glycyl lysine isopeptide (Lys-Gly) (interchain with G-Cter in SUMO)). Lys-271 participates in a covalent cross-link: Glycyl lysine isopeptide (Lys-Gly) (interchain with G-Cter in ubiquitin). At Glu-272 the chain carries 5-glutamyl polyglutamate. The short motif at 281–291 (DVSVEKEKPGS) is the Nuclear localization signal element. Residue Gly-290 coordinates 2',3'-cGAMP. Ser-291 is subject to Phosphoserine; by CDK1 and PKB. 5-glutamyl glutamate is present on Glu-302. Asp-307 contributes to the GTP binding site. A Mg(2+)-binding site is contributed by Asp-307. Asp-307 serves as a coordination point for 2',3'-cGAMP. Residues 329 to 370 (QGWLGTKVRTNLRREPFYLVPKNAKDGNSFQGETWRLSFSHT) form an interaction with collided ribosomes region. Residue Lys-335 forms a Glycyl lysine isopeptide (Lys-Gly) (interchain with G-Cter in SUMO); alternate linkage. A Glycyl lysine isopeptide (Lys-Gly) (interchain with G-Cter in ubiquitin); alternate cross-link involves residue Lys-335. 2',3'-cGAMP contacts are provided by residues Lys-350 and 364 to 366 (RLS). 364–371 (RLSFSHTE) serves as a coordination point for GTP. Glu-371 contacts ATP. Residue Lys-372 forms a Glycyl lysine isopeptide (Lys-Gly) (interchain with G-Cter in SUMO); alternate linkage. A Glycyl lysine isopeptide (Lys-Gly) (interchain with G-Cter in ubiquitin); alternate cross-link involves residue Lys-372. At Lys-372 the chain carries N6-acetyllysine. The interval 372 to 395 (KYILNNHGIEKTCCESSGAKCCRK) is DNA-binding. His-378 contacts Zn(2+). Lys-382 participates in a covalent cross-link: Glycyl lysine isopeptide (Lys-Gly) (interchain with G-Cter in SUMO). Lys-382 is modified (N6-acetyllysine). Residues Cys-384, Cys-385, and Cys-392 each contribute to the Zn(2+) site. 2 S-palmitoyl cysteine lipidation sites follow: Cys-392 and Cys-393. Glycyl lysine isopeptide (Lys-Gly) (interchain with G-Cter in ubiquitin) cross-links involve residues Lys-399, Lys-402, Lys-409, and Lys-410. Position 402 (Lys-402) interacts with ATP. An N6-acetyllysine modification is found at Lys-402. Phosphoserine is present on Ser-420. 420–424 (SYHVK) contacts ATP. Residue Cys-459 is the site of S-palmitoyl cysteine attachment. A Glycyl lysine isopeptide (Lys-Gly) (interchain with G-Cter in SUMO); alternate cross-link involves residue Lys-464. Lys-464 participates in a covalent cross-link: Glycyl lysine isopeptide (Lys-Gly) (interchain with G-Cter in ubiquitin); alternate. At Lys-491 the chain carries N6-methyllysine.

Belongs to the mab-21 family. In terms of assembly, monomer in the absence of DNA. Homodimer in presence of dsDNA: forms a 2:2 dimer with two enzymes binding to two DNA molecules. Interacts with nucleosomes; interaction is mainly mediated via histones H2A and H2B and inactivates the nucleotidyltransferase activity by blocking DNA-binding and subsequent activation. Interacts with PQBP1 (via WW domain). Interacts with TRIM14; this interaction recruits USP14, leading to deubiquitinate and stabilize CGAS and promote type I interferon production. Interacts with ZCCHC3; promoting sensing of dsDNA by CGAS. Interacts (when not monomethylated) with (poly-ADP-ribosylated) PARP1; interaction takes place in the nucleus and prevents the formation of the PARP1-TIMELESS complex. Interacts (when monomethylated) with SGF29; interaction with SGF29 prevents interaction with PARP1. Interacts with PCBP2; preventing the formation of liquid-like droplets in which CGAS is activated. Interacts with Irgm1; promoting CGAS degradation. Interacts with DDX41. The cofactor is Mg(2+). It depends on Mn(2+) as a cofactor. Requires Zn(2+) as cofactor. In terms of processing, the N-terminal disordered part (1-146) is phosphorylated by AURKB during the G2-M transition, blocking CGAS liquid phase separation and preventing activation. Phosphorylation at Tyr-201 by BLK promotes cytosolic retention. Localizes into the nucleus following dephosphorylation at Tyr-201. Phosphorylation at Ser-420 activates the nucleotidyltransferase activity. Dephosphorylation at Ser-420 by PPP6C impairs its ability to bind GTP, thereby inactivating it. Phosphorylation at Thr-52 and Ser-199 by PRKDC inhibits its cyclic GMP-AMP synthase activity by impairing homodimerization and activation. Phosphorylation at Ser-291 by AKT (AKT1, AKT2 or AKT3) suppresses the nucleotidyltransferase activity. Phosphorylation at Ser-291 by CDK1 during mitosis leads to its inhibition, thereby preventing CGAS activation by self-DNA during mitosis. Dephosphorylated at Ser-291 by protein phosphatase PP1 upon mitotic exit. Ubiquitinated at Lys-402 via 'Lys-48'-linked polyubiquitin chains, leading to its SQSTM1-mediated autophagic degradation. Interaction with TRIM14 promotes recruitment of USP14, leading to deubiquitinate Lys-402 and stabilize CGAS. Ubiquitinated at Lys-372 by RNF185 via 'Lys-27'-linked polyubiquitination, promoting CGAS cyclic GMP-AMP synthase activity. Monoubiquitination at Lys-335 by TRIM56 promotes oligomerization and subsequent activation. Monoubiquitination by TRIM41 promotes CGAS activation. Ubiquitination at Lys-271 and Lys-464 via 'Lys-48'-linked polyubiquitination promotes its degradation. Deubiquitination at Lys-271 by USP29 promotes its stabilization. Deubiquitinated by USP27X, promoting its stabilization. Ubiquitinated at Lys-399 via 'Lys-63'-linked polyubiquitin chains by MARCHF8, leading to the inhibition of its DNA binding ability. In cycling cells, nucleosome-bound CGAS is ubiquitinated at Lys-409 and Lys-410 via 'Lys-48'-linked polyubiquitin chains by the ECS(SPSB3) complex, leading to its degradation: ubiquitination and degradation of nuclear CGAS during G1 and G2 phases is required to promote low intranuclear CGAS abundance before the next mitotic cycle. Post-translationally, sumoylated at Lys-217 and Lys-464 by TRIM38 in uninfected cells and during the early phase of viral infection, promoting its stability by preventing ubiquitination at Lys-271 and Lys-464, and subsequent degradation. Desumoylated by SENP2 during the late phase of viral infection. Sumoylation at Lys-335, Lys-372 and Lys-382 prevents DNA-binding, oligomerization and nucleotidyltransferase activity. Desumoylation at Lys-335, Lys-372 and Lys-382 by SENP7 relieves inhibition and activates CGAS. In terms of processing, polyglutamylated by TTLL6 at Glu-272, leading to impair DNA-binding activity. Monoglutamylated at Glu-302 by TTLL4, leading to impair the nucleotidyltransferase activity. Deglutamylated by AGBL5/CCP5 and AGBL6/CCP6. Acetylation at Lys-372, Lys-382 and Lys-402 inhibits the cyclic GMP-AMP synthase activity. Deacetylated upon cytosolic DNA challenge such as viral infections. Acetylation by KAT5 increases the cyclic GMP-AMP synthase activity by promoting DNA-binding and subsequent activation. Post-translationally, proteolytically cleaved by apoptotic caspases during apoptosis, leading to its inactivation. The damage of the nucleus and the mitochondria during apoptosis leads to leakage of nuclear and mitochondrial DNA, which activate CGAS: cleavage and inactivation during apoptosis in required to prevent cytokine overproduction. Cleaved by CASP7 and CASP3 during virus-induced apoptosis, thereby inactivating it and preventing cytokine overproduction. Cleaved by CASP1 upon DNA virus infection; the cleavage impairs cGAMP production. Also cleaved by the pyroptotic CASP4 during non-canonical inflammasome activation; does not cut at the same sites than CASP1. In terms of processing, degraded via selective autophagy following interaction with Irgm1. Irgm1 promotes CGAS recruitment to autophagosome membranes, promoting its SQSTM1/p62-dependent autophagic degradation. Poly-ADP-ribosylation at Glu-176 by PARP1 impairs DNA-binding, thereby preventing the cyclic GMP-AMP synthase activity. Post-translationally, palmitoylation at Cys-459 by ZDHHC18 impairs DNA-binding, thereby preventing the cyclic GMP-AMP synthase activity. Palmitoylation at Cys-392 and Cys-393 by ZDHHC9 promotes homodimerization and cyclic GMP-AMP synthase activity. Depalmitoylation at Cys-392 and Cys-393 by LYPLAL1 impairs homodimerization and cyclic GMP-AMP synthase activity. In terms of processing, monomethylated at Lys-491 by SETD7. Monomethylation promotes interaction with SGF29, preventing interaction between PARP1 nad SGF29. Demethylation by RIOX1 promotes interaction with PARP1, followed by PARP1 inactivation. Lactylation by AARS2 prevents ability to undergo liquid-liquid phase separation (LLPS), thereby inhibiting CGAS activation.

It is found in the nucleus. Its subcellular location is the chromosome. It localises to the cell membrane. The protein localises to the cytoplasm. The protein resides in the cytosol. The catalysed reaction is GTP + ATP = 2',3'-cGAMP + 2 diphosphate. It carries out the reaction GTP + ATP = pppGp(2'-5')A + diphosphate. The enzyme catalyses pppGp(2'-5')A = 2',3'-cGAMP + diphosphate. Its activity is regulated as follows. The enzyme activity is strongly increased by double-stranded DNA (dsDNA), but not by single-stranded DNA or RNA. DNA-binding induces the formation of liquid-like droplets in which CGAS is activated. Liquid-like droplets also create a selective environment that restricts entry of negative regulators, such as TREX1 or BANF1/BAF, allowing sensing of DNA. A number of mechanisms exist to restrict its activity toward self-DNA. The nucleotidyltransferase activity is inhibited in the nucleus via its association with nucleosomes: interacts with the acidic patch of histones H2A and H2B, thereby blocking DNA-binding and subsequent activation. CGAS is also inactive when associated with mitotic chromatin. Chromatin-bound CGAS cannot be activated by exogenous DNA in mitotic cells: phosphorylation of the N-terminal disordered part by AURKB during the G2-M transition blocks CGAS liquid phase separation and activation. Activity toward self-DNA is inhibited by BANF1/BAF upon acute loss of nuclear membrane integrity: BANF1/BAF acts by outcompeting CGAS for DNA-binding, thereby preventing CGAS activation. DNA-induced activation at micronuclei is also limited by TREX1, which degrades micronuclear DNA upon nuclear envelope rupture, thereby preventing CGAS activation. CGAS can be released from nucleosomes and activated by MRE11 component of the MRN complex, which displaces CGAS from acidic-patch-mediated sequestration. Acetylation at Lys-372, Lys-382 and Lys-402 inhibits the cyclic GMP-AMP synthase activity. Acetylation by KAT5 increases the cyclic GMP-AMP synthase activity by promoting DNA-binding and subsequent activation. Phosphorylation at Ser-291 suppresses the nucleotidyltransferase activity. Phosphorylation at Ser-420 promotes the cyclic GMP-AMP synthase activity. Phosphorylation at Thr-52 and Ser-199 inhibits its cyclic GMP-AMP synthase activity. Ubiquitination at Lys-372 via 'Lys-27'-linked polyubiquitination enhances the cyclic GMP-AMP synthase activity. Monoubiquitination at Lys-335 promotes oligomerization and subsequent activation. Sumoylation at Lys-335, Lys-372 and Lys-382 prevents DNA-binding, oligomerization and nucleotidyltransferase activity. The enzyme activity is impaired by the cleavage by CASP1. In addition to DNA, also activated by collided ribosomes upon translation stress: specifically binds collided ribosomes, promoting its activation and triggering type-I interferon production. In hematopoietic stem cells, binding to circular RNA cia-cGAS inhibits the cyclic GMP-AMP synthase activity. Strongly inhibited by compound RU.521, which is specific for mouse protein. Functionally, nucleotidyltransferase that catalyzes the formation of cyclic GMP-AMP (2',3'-cGAMP) from ATP and GTP and plays a key role in innate immunity. Catalysis involves both the formation of a 2',5' phosphodiester linkage at the GpA step and the formation of a 3',5' phosphodiester linkage at the ApG step, producing c[G(2',5')pA(3',5')p]. Acts as a key DNA sensor: directly binds double-stranded DNA (dsDNA), inducing the formation of liquid-like droplets in which CGAS is activated, leading to synthesis of 2',3'-cGAMP, a second messenger that binds to and activates STING1, thereby triggering type-I interferon production. Preferentially binds long dsDNA (around 45 bp) and forms ladder-like networks that function cooperatively to stabilize individual cGAS-dsDNA complexes. Acts as a key foreign DNA sensor, the presence of double-stranded DNA (dsDNA) in the cytoplasm being a danger signal that triggers the immune responses. Has antiviral activity by sensing the presence of dsDNA from DNA viruses in the cytoplasm. Also acts as an innate immune sensor of infection by retroviruses by detecting the presence of reverse-transcribed DNA in the cytosol. Detection of retroviral reverse-transcribed DNA in the cytosol may be indirect and be mediated via interaction with PQBP1, which directly binds reverse-transcribed retroviral DNA. Also detects the presence of DNA from bacteria. 2',3'-cGAMP can be transferred from producing cells to neighboring cells through gap junctions, leading to promote STING1 activation and convey immune response to connecting cells. 2',3'-cGAMP can also be transferred between cells by virtue of packaging within viral particles contributing to IFN-induction in newly infected cells in a cGAS-independent but STING1-dependent manner. Also senses the presence of neutrophil extracellular traps (NETs) that are translocated to the cytosol following phagocytosis, leading to synthesis of 2',3'-cGAMP. In addition to foreign DNA, can also be activated by endogenous nuclear or mitochondrial DNA. When self-DNA leaks into the cytosol during cellular stress (such as mitochondrial stress, DNA damage, mitotic arrest or senescence), or is present in form of cytosolic micronuclei, CGAS is activated leading to a state of sterile inflammation. Acts as a regulator of cellular senescence by binding to cytosolic chromatin fragments that are present in senescent cells, leading to trigger type-I interferon production via STING1 and promote cellular senescence. Also involved in the inflammatory response to genome instability and double-stranded DNA breaks: acts by localizing to micronuclei arising from genome instability. Micronuclei, which as frequently found in cancer cells, consist of chromatin surrounded by its own nuclear membrane: following breakdown of the micronuclear envelope, a process associated with chromothripsis, CGAS binds self-DNA exposed to the cytosol, leading to 2',3'-cGAMP synthesis and subsequent activation of STING1 and type-I interferon production. In a healthy cell, CGAS is however kept inactive even in cellular events that directly expose it to self-DNA, such as mitosis, when cGAS associates with chromatin directly after nuclear envelope breakdown or remains in the form of postmitotic persistent nuclear cGAS pools bound to chromatin. Nuclear CGAS is inactivated by chromatin via direct interaction with nucleosomes, which block CGAS from DNA binding and thus prevent CGAS-induced autoimmunity. Also acts as a suppressor of DNA repair in response to DNA damage: inhibits homologous recombination repair by interacting with PARP1, the CGAS-PARP1 interaction leading to impede the formation of the PARP1-TIMELESS complex. In addition to DNA, also sense translation stress: in response to translation stress, translocates to the cytosol and associates with collided ribosomes, promoting its activation and triggering type-I interferon production. The sequence is that of Cyclic GMP-AMP synthase from Mus musculus (Mouse).